A 361-amino-acid polypeptide reads, in one-letter code: Peptide chain release factor 1 (361 aa).

Residue Q235 is modified to N5-methylglutamine.

Belongs to the prokaryotic/mitochondrial release factor family. Post-translationally, methylated by PrmC. Methylation increases the termination efficiency of RF1.

The protein localises to the cytoplasm. Functionally, peptide chain release factor 1 directs the termination of translation in response to the peptide chain termination codons UAG and UAA. The chain is Peptide chain release factor 1 from Buchnera aphidicola subsp. Acyrthosiphon pisum (strain 5A).